The sequence spans 493 residues: Ribose import ATP-binding protein RbsA (493 aa).

ABC transporter domains lie at 5-241 (LKIS…VGRR) and 252-491 (EKGE…AAAI). 37-44 (GENGAGKS) provides a ligand contact to ATP.

The protein belongs to the ABC transporter superfamily. Ribose importer (TC 3.A.1.2.1) family. As to quaternary structure, the complex is composed of an ATP-binding protein (RbsA), two transmembrane proteins (RbsC) and a solute-binding protein (RbsB).

The protein resides in the cell inner membrane. It catalyses the reaction D-ribose(out) + ATP + H2O = D-ribose(in) + ADP + phosphate + H(+). Its function is as follows. Part of the ABC transporter complex RbsABC involved in ribose import. Responsible for energy coupling to the transport system. The polypeptide is Ribose import ATP-binding protein RbsA (Haemophilus influenzae (strain ATCC 51907 / DSM 11121 / KW20 / Rd)).